Reading from the N-terminus, the 551-residue chain is Glucose-6-phosphate isomerase 2 (551 aa).

The Proton donor role is filled by Glu353. Residues His384 and Lys512 contribute to the active site.

Belongs to the GPI family.

It localises to the cytoplasm. It carries out the reaction alpha-D-glucose 6-phosphate = beta-D-fructose 6-phosphate. Its pathway is carbohydrate biosynthesis; gluconeogenesis. It participates in carbohydrate degradation; glycolysis; D-glyceraldehyde 3-phosphate and glycerone phosphate from D-glucose: step 2/4. Functionally, catalyzes the reversible isomerization of glucose-6-phosphate to fructose-6-phosphate. The sequence is that of Glucose-6-phosphate isomerase 2 from Colwellia psychrerythraea (strain 34H / ATCC BAA-681) (Vibrio psychroerythus).